Here is a 170-residue protein sequence, read N- to C-terminus: RxLR effector protein CRE16 (170 aa).

Positions 1 to 23 are cleaved as a signal peptide; the sequence is MSKLFYAFAVLAVHVLTSSPTTA. The RxLR-dEER motif lies at 47–68; the sequence is RFLRSIHEGEDSLKPSAFSEER.

The protein belongs to the RxLR effector family.

It is found in the secreted. The protein localises to the host cytoplasm. It localises to the host nucleus. In terms of biological role, effector that is involved in host plant infection. Contributes to virulence during the early infection stage, by inhibiting plant defense responses induced by both PAMP-triggered immunity (PTI) and effector-triggered immunity (ETI). This Phytophthora infestans (strain T30-4) (Potato late blight agent) protein is RxLR effector protein CRE16.